We begin with the raw amino-acid sequence, 462 residues long: 3-deoxy-D-manno-octulosonic acid transferase (462 aa).

The chain crosses the membrane as a helical; Signal-anchor span at residues 2–22 (MLLYYILSFILLPVYFIIIFI). Residues 47–90 (SLLDLQMSVNQEGFKVDTEHKATSYVYIHRNASLMYKLSLERSY) form the RPE1 insert domain. E104 functions as the Proton acceptor in the catalytic mechanism. Residues 308-309 (PR), 349-351 (FGE), and 374-377 (NILE) each bind CMP.

The protein belongs to the glycosyltransferase group 1 family.

The protein localises to the cell inner membrane. It carries out the reaction lipid IVA (E. coli) + CMP-3-deoxy-beta-D-manno-octulosonate = alpha-Kdo-(2-&gt;6)-lipid IVA (E. coli) + CMP + H(+). It participates in bacterial outer membrane biogenesis; LPS core biosynthesis. In terms of biological role, involved in lipopolysaccharide (LPS) biosynthesis. Catalyzes the transfer of 3-deoxy-D-manno-octulosonate (Kdo) residue(s) from CMP-Kdo to lipid IV(A), the tetraacyldisaccharide-1,4'-bisphosphate precursor of lipid A. The chain is 3-deoxy-D-manno-octulosonic acid transferase (waaA) from Rickettsia typhi (strain ATCC VR-144 / Wilmington).